Consider the following 293-residue polypeptide: ATP synthase gamma chain (293 aa).

The protein belongs to the ATPase gamma chain family. In terms of assembly, F-type ATPases have 2 components, CF(1) - the catalytic core - and CF(0) - the membrane proton channel. CF(1) has five subunits: alpha(3), beta(3), gamma(1), delta(1), epsilon(1). CF(0) has three main subunits: a, b and c.

It localises to the cell membrane. Functionally, produces ATP from ADP in the presence of a proton gradient across the membrane. The gamma chain is believed to be important in regulating ATPase activity and the flow of protons through the CF(0) complex. This Streptococcus agalactiae serotype III (strain NEM316) protein is ATP synthase gamma chain.